A 514-amino-acid polypeptide reads, in one-letter code: 2,3-bisphosphoglycerate-independent phosphoglycerate mutase (514 aa).

Mn(2+) contacts are provided by Asp-14 and Ser-64. The Phosphoserine intermediate role is filled by Ser-64. Substrate-binding positions include His-125, Arg-155–Asp-156, Arg-187, Arg-193, Arg-263–Arg-266, and Lys-337. Residues Asp-404, His-408, Asp-445, His-446, and His-464 each coordinate Mn(2+).

It belongs to the BPG-independent phosphoglycerate mutase family. In terms of assembly, monomer. The cofactor is Mn(2+).

The enzyme catalyses (2R)-2-phosphoglycerate = (2R)-3-phosphoglycerate. It participates in carbohydrate degradation; glycolysis; pyruvate from D-glyceraldehyde 3-phosphate: step 3/5. In terms of biological role, catalyzes the interconversion of 2-phosphoglycerate and 3-phosphoglycerate. This is 2,3-bisphosphoglycerate-independent phosphoglycerate mutase from Serratia proteamaculans (strain 568).